We begin with the raw amino-acid sequence, 402 residues long: Succinylornithine transaminase (402 aa).

Lysine 252 is modified (N6-(pyridoxal phosphate)lysine).

It belongs to the class-III pyridoxal-phosphate-dependent aminotransferase family. AstC subfamily. Pyridoxal 5'-phosphate is required as a cofactor.

It carries out the reaction N(2)-succinyl-L-ornithine + 2-oxoglutarate = N-succinyl-L-glutamate 5-semialdehyde + L-glutamate. It participates in amino-acid degradation; L-arginine degradation via AST pathway; L-glutamate and succinate from L-arginine: step 3/5. Catalyzes the transamination of N(2)-succinylornithine and alpha-ketoglutarate into N(2)-succinylglutamate semialdehyde and glutamate. Can also act as an acetylornithine aminotransferase. The sequence is that of Succinylornithine transaminase from Photorhabdus laumondii subsp. laumondii (strain DSM 15139 / CIP 105565 / TT01) (Photorhabdus luminescens subsp. laumondii).